The primary structure comprises 791 residues: MSVAAAGRGFASSLSSPQIRRIALKEAKLTPHIWAALHWNLGLRLVPSVRVGILVLLIFLPSTFCDIGSVYNSSYETVIPERLPGKGGKDPGGKVSYMLLMQGQKQLLHLEVKGHYPENNFPVYSYHNGILRQEMPLLSQDCHYEGYMEGVPGSFVSVNICSGLRGVLIKEETSYGIEPMLSSKNFEHVLYTMEHQPVVSCSVTPKDSPGDTSHPPRSRKPDDLLVLTDWWSHTKYVEMFVVVNHQRFQMWGSNINETVQAVMDIIALANSFTRGINTEVVLVGLEIWTEGDPIEVPVDLQTTLRNFNFWRQEKLVGRVRHDVAHLIVGHRPGENEGQAFLRGACSGEFAAAVEAFHHEDVLLFAALMAHELGHNLGIQHDHPTCTCGPKHFCLMGEKIGKDSGFSNCSSDHFLRFLHDHRGACLLDEPGRQSRMRRAANCGNGVVEDLEECDCGSDCDSHPCCSPTCTLKEGAQCSEGLCCYNCTFKKKGSLCRPAEDVCDLPEYCDGSTQECPANSYMQDGTQCDRIYYCLGGWCKNPDKQCSRIYGYPARSAPEECYISVNTKANRFGNCGHPTSANFRYETCSDEDVFCGKLVCTDVRYLPKVKPLHSLLQVPYGEDWCWSMDAYNITDVPDDGDVQSGTFCAPNKVCMEYICTGRGVLQYNCEPQEMCHGNGVCNNFKHCHCDAGFAPPDCSSPGNGGSVDSGPVGKPADRHLSLSFLAEESPDDKMEDEEVNLKVMVLVVPIFLVVLLCCLMLIAYLWSEVQEVVSPPSSSESSSSSSWSDSDSQ.

The signal sequence occupies residues 1–65; it reads MSVAAAGRGF…LLIFLPSTFC (65 aa). Asparagine 72 carries an N-linked (GlcNAc...) asparagine glycan. Positions 201–220 are disordered; the sequence is CSVTPKDSPGDTSHPPRSRK. Residues 235 to 429 form the Peptidase M12B domain; the sequence is KYVEMFVVVN…HRGACLLDEP (195 aa). N-linked (GlcNAc...) asparagine glycosylation occurs at asparagine 256. Cystine bridges form between cysteine 345–cysteine 424, cysteine 385–cysteine 408, and cysteine 387–cysteine 393. Zn(2+) is bound at residue histidine 370. Glutamate 371 is a catalytic residue. 2 residues coordinate Zn(2+): histidine 374 and histidine 380. N-linked (GlcNAc...) asparagine glycosylation is found at asparagine 407 and asparagine 484. The Disintegrin domain occupies 438 to 522; that stretch reads AANCGNGVVE…ECPANSYMQD (85 aa). Cysteine 494 and cysteine 514 are oxidised to a cystine. Residue asparagine 630 is glycosylated (N-linked (GlcNAc...) asparagine). In terms of domain architecture, EGF-like spans 663-697; it reads LQYNCEPQEMCHGNGVCNNFKHCHCDAGFAPPDCS. Disulfide bonds link cysteine 667–cysteine 679, cysteine 673–cysteine 685, and cysteine 687–cysteine 696. Residues 741-761 form a helical membrane-spanning segment; it reads VMVLVVPIFLVVLLCCLMLIA. Topologically, residues 762-791 are cytoplasmic; that stretch reads YLWSEVQEVVSPPSSSESSSSSSWSDSDSQ. Residues 772–791 form a disordered region; sequence SPPSSSESSSSSSWSDSDSQ.

As to quaternary structure, heterodimer with ADAM2/fertilin subunit beta. Testis.

It localises to the membrane. Functionally, may be involved in sperm-egg fusion. The polypeptide is Disintegrin and metalloproteinase domain-containing protein 1a (Adam1a) (Mus musculus (Mouse)).